A 262-amino-acid chain; its full sequence is Putative carbamate hydrolase RutD (262 aa).

It belongs to the AB hydrolase superfamily. Hydrolase RutD family.

It carries out the reaction carbamate + 2 H(+) = NH4(+) + CO2. Functionally, involved in pyrimidine catabolism. May facilitate the hydrolysis of carbamate, a reaction that can also occur spontaneously. In Rhizobium rhizogenes (strain K84 / ATCC BAA-868) (Agrobacterium radiobacter), this protein is Putative carbamate hydrolase RutD.